We begin with the raw amino-acid sequence, 226 residues long: Cytidylate kinase (226 aa).

ATP is bound at residue 10–18 (GPASSGKST).

It belongs to the cytidylate kinase family. Type 1 subfamily.

It is found in the cytoplasm. The enzyme catalyses CMP + ATP = CDP + ADP. It carries out the reaction dCMP + ATP = dCDP + ADP. This is Cytidylate kinase from Streptococcus pyogenes serotype M1.